Consider the following 347-residue polypeptide: Quinolinate synthase (347 aa).

Residues H47 and S68 each coordinate iminosuccinate. Residue C113 participates in [4Fe-4S] cluster binding. Residues 139-141 and S156 contribute to the iminosuccinate site; that span reads YAN. Residue C200 participates in [4Fe-4S] cluster binding. Iminosuccinate is bound by residues 226 to 228 and T243; that span reads HPE. C297 contributes to the [4Fe-4S] cluster binding site.

This sequence belongs to the quinolinate synthase family. Type 1 subfamily. The cofactor is [4Fe-4S] cluster.

The protein resides in the cytoplasm. The enzyme catalyses iminosuccinate + dihydroxyacetone phosphate = quinolinate + phosphate + 2 H2O + H(+). Its pathway is cofactor biosynthesis; NAD(+) biosynthesis; quinolinate from iminoaspartate: step 1/1. Catalyzes the condensation of iminoaspartate with dihydroxyacetone phosphate to form quinolinate. The polypeptide is Quinolinate synthase (Escherichia coli O45:K1 (strain S88 / ExPEC)).